The sequence spans 182 residues: Plasmolipin (182 aa).

Residues 1–35 (MAEFPSKVSTRTSSPAQGVGASVSALRPDLGFVRS) are Cytoplasmic-facing. A Phosphoserine modification is found at Ser-9. Positions 32 to 166 (FVRSALGVLA…SAFFSFQAWR (135 aa)) constitute an MARVEL domain. The helical transmembrane segment at 36 to 56 (ALGVLALLQLALGLLVWALIA) threads the bilayer. Residues 57–68 (DTPYHLYPAYGW) are Extracellular-facing. Residues 69–89 (VMFVAVFLWLVTIVFFIIYLF) traverse the membrane as a helical segment. Topologically, residues 90-99 (QLHMKLYMVP) are cytoplasmic. Residues 100–120 (WPLVLLIFFVAATVLYITAFI) traverse the membrane as a helical segment. The Extracellular segment spans residues 121-141 (ACAAAVDLTSLRGSRPYNQRS). A helical membrane pass occupies residues 142–162 (AASFFACLVMIAYGVSAFFSF). Residues 163 to 182 (QAWRGVGSNAATSQMAGGYS) are Cytoplasmic-facing.

The protein belongs to the MAL family. In terms of assembly, forms oligomers. Post-translationally, phosphorylated.

The protein resides in the membrane. It is found in the cell membrane. The protein localises to the myelin membrane. It localises to the apical cell membrane. In terms of biological role, main component of the myelin sheath that plays an important role in myelin membrane biogenesis and myelination. Plays an essential function in apical endocytosis. Regulates epithelial development through the regulation of apical endocytosis. Part of the intracellular machinery that mediates basolateral-to-apical transport of ICAM-1, an essential adhesion receptor in epithelial cells, from the subapical compartment in hepatic epithelial cells. This chain is Plasmolipin (Pllp), found in Mus musculus (Mouse).